The chain runs to 391 residues: 5-amino-6-(D-ribitylamino)uracil--L-tyrosine 4-hydroxyphenyl transferase (391 aa).

The Radical SAM core domain maps to 55–302; sequence VTYVINRNIN…GAVARIYLGN (248 aa). [4Fe-4S] cluster contacts are provided by C69, C73, and C76.

This sequence belongs to the radical SAM superfamily. CofH family. In terms of assembly, consists of two subunits, CofG and CofH. The cofactor is [4Fe-4S] cluster.

The catalysed reaction is 5-amino-6-(D-ribitylamino)uracil + L-tyrosine + S-adenosyl-L-methionine = 5-amino-5-(4-hydroxybenzyl)-6-(D-ribitylimino)-5,6-dihydrouracil + 2-iminoacetate + 5'-deoxyadenosine + L-methionine + H(+). It functions in the pathway cofactor biosynthesis; coenzyme F0 biosynthesis. Catalyzes the radical-mediated synthesis of 5-amino-5-(4-hydroxybenzyl)-6-(D-ribitylimino)-5,6-dihydrouracil from 5-amino-6-(D-ribitylamino)uracil and L-tyrosine. This chain is 5-amino-6-(D-ribitylamino)uracil--L-tyrosine 4-hydroxyphenyl transferase, found in Trichormus variabilis (strain ATCC 29413 / PCC 7937) (Anabaena variabilis).